We begin with the raw amino-acid sequence, 444 residues long: MTLDLSKPATAGYLSGFANEFATEALPGALPHGRNSPQRAPYGLYAEQLSGTAFTAPRGHNRRSWLYRIRPAAVHRPFEPFTGPQRLVSEFGDSADVPPTPPNQLRWDPLPMPVEPTDFVEGLVTMAGNGSAAAMNGCAIHLYAANRSMQDRFFYSADGELLIVPQQGRLFIATEFGRLDVEPFEIAVIPRGVRFSVALPDGDARGYICENFGALLRLPDLGPIGSNGLANPRDFLTPQAAYEDREGAFELVAKLNGRLWRADIGHSPFDVVAWHGNYAPYKYDLRLFNTIGSISFDHPDPSIFLVLQSQSDTPGVDAIDFVIFPPRWLAAEDTFRPPWFHRNVASEFMGLVHGAYDAKAEGFVPGGASLHNCMSGHGPDADTFEKASASDTTKPHKVDATMAFMFETRTLIRPTRYALDTAQLQPDYFECWQGIRKHFNPEQP.

His298 serves as the catalytic Proton acceptor. Fe cation contacts are provided by His341 and Glu347. Homogentisate contacts are provided by Tyr356 and His377. His377 contacts Fe cation.

The protein belongs to the homogentisate dioxygenase family. In terms of assembly, hexamer; dimer of trimers. Fe cation is required as a cofactor.

The catalysed reaction is homogentisate + O2 = 4-maleylacetoacetate + H(+). The protein operates within amino-acid degradation; L-phenylalanine degradation; acetoacetate and fumarate from L-phenylalanine: step 4/6. In terms of biological role, involved in the catabolism of homogentisate (2,5-dihydroxyphenylacetate or 2,5-OH-PhAc), a central intermediate in the degradation of phenylalanine and tyrosine. Catalyzes the oxidative ring cleavage of the aromatic ring of homogentisate to yield maleylacetoacetate. This Burkholderia ambifaria (strain ATCC BAA-244 / DSM 16087 / CCUG 44356 / LMG 19182 / AMMD) (Burkholderia cepacia (strain AMMD)) protein is Homogentisate 1,2-dioxygenase.